The sequence spans 505 residues: Deoxyguanosinetriphosphate triphosphohydrolase (505 aa).

The region spanning 66 to 273 (RLTHSMEVQQ…MEAADDISYC (208 aa)) is the HD domain.

The protein belongs to the dGTPase family. Type 1 subfamily. As to quaternary structure, homotetramer. It depends on Mg(2+) as a cofactor.

The enzyme catalyses dGTP + H2O = 2'-deoxyguanosine + triphosphate + H(+). In terms of biological role, dGTPase preferentially hydrolyzes dGTP over the other canonical NTPs. In Escherichia coli O157:H7, this protein is Deoxyguanosinetriphosphate triphosphohydrolase.